The sequence spans 502 residues: Protein DETOXIFICATION 7 (502 aa).

Transmembrane regions (helical) follow at residues 36–56, 68–88, 112–132, 143–163, 182–202, 208–228, 262–282, 291–311, 331–351, 375–395, 408–428, and 436–456; these read MAAP…ISMV, AVAI…VGFA, YSSM…WFFM, PLIS…LFGF, LFVS…LLVY, IVGA…LLWI, AMMI…SGLL, VISI…AIGA, AAVN…TITL, ITPI…LSGV, ASLG…CFVM, and WIGI…VTFF.

It belongs to the multi antimicrobial extrusion (MATE) (TC 2.A.66.1) family.

The protein resides in the membrane. The chain is Protein DETOXIFICATION 7 from Arabidopsis thaliana (Mouse-ear cress).